We begin with the raw amino-acid sequence, 85 residues long: MGNLISTSCFNSKEKFRSQISDYSTWYPQPGQHISIRTFRELNPAPTSSPTSTRTETQLNGGNSRSTVEVLEEVNRQLTTHMPRR.

Residue glycine 2 is the site of N-myristoyl glycine; by host attachment. Positions 42–65 (LNPAPTSSPTSTRTETQLNGGNSR) are disordered. Positions 44-57 (PAPTSSPTSTRTET) are enriched in low complexity.

Belongs to the geminiviridae protein AC4/C4 family. As to quaternary structure, interacts with Arabidopsis thaliana RCH2, ASK7/ASK-eta and ASK6/ASK-zeta. Phosphorylated by Arabidopsis thaliana ASK7/ASK-eta mainly on threonine and serine residues. In terms of tissue distribution, expressed in vascular tissues, and especially in phloem cells.

It localises to the host cell membrane. Major determinant of pathogenesis that affects the hyperplastic response of the host to viral infection. Mediates the induction of cell division in permissive cells, mainly in phloem. May act as a suppressor of RNA-mediated gene silencing, also known as post-transcriptional gene silencing (PTGS), a mechanism of plant viral defense that limits the accumulation of viral RNAs. The sequence is that of Protein C4 from Beet curly top virus (strain California/Logan) (BCTV).